A 179-amino-acid polypeptide reads, in one-letter code: Large ribosomal subunit protein uL6 (179 aa).

The protein belongs to the universal ribosomal protein uL6 family. As to quaternary structure, part of the 50S ribosomal subunit.

Functionally, this protein binds to the 23S rRNA, and is important in its secondary structure. It is located near the subunit interface in the base of the L7/L12 stalk, and near the tRNA binding site of the peptidyltransferase center. This Chlorobium phaeovibrioides (strain DSM 265 / 1930) (Prosthecochloris vibrioformis (strain DSM 265)) protein is Large ribosomal subunit protein uL6.